The chain runs to 298 residues: ATP-dependent Clp protease proteolytic subunit 5, chloroplastic (298 aa).

A chloroplast-targeting transit peptide spans 1–100; sequence MAHACVSTSA…SSPYFPAYAQ (100 aa). G101 is subject to N-acetylglycine. Catalysis depends on S193, which acts as the Nucleophile. The active site involves H218.

This sequence belongs to the peptidase S14 family. As to quaternary structure, component of the chloroplastic Clp protease core complex which consist of at least 16 proteins: CLPP4 (3 copies), CLPP5 (3 copies), CLPR4 (2 copies), ClpP1 (1 copy), CLPP6 (1 copy), CLPR2 (1 copy), CLPT1 (1 copy), CLPT2 (1 copy) and 3 copies of CLPP3 and/or CLPR1 and/or CLPR3. The core complex is organized in two heptameric rings, one containing CLPP3,4,5,6 in a 1:2:3:1 ratio and the other CLPP1 and CLPR1,2,3,4 in a 3:1:1:1:1 ratio. Interacts with CHIP. In terms of processing, ubiquitinated in vitro by CHIP. As to expression, mostly expressed in leaves. Also detected in stems, and to a lower extent, in roots (at protein level).

It is found in the plastid. The protein resides in the chloroplast stroma. It catalyses the reaction Hydrolysis of proteins to small peptides in the presence of ATP and magnesium. alpha-casein is the usual test substrate. In the absence of ATP, only oligopeptides shorter than five residues are hydrolyzed (such as succinyl-Leu-Tyr-|-NHMec, and Leu-Tyr-Leu-|-Tyr-Trp, in which cleavage of the -Tyr-|-Leu- and -Tyr-|-Trp bonds also occurs).. Its function is as follows. Cleaves peptides in various proteins in a process that requires ATP hydrolysis. Has a chymotrypsin-like activity. Plays a major role in the degradation of misfolded proteins. The chain is ATP-dependent Clp protease proteolytic subunit 5, chloroplastic from Arabidopsis thaliana (Mouse-ear cress).